A 65-amino-acid polypeptide reads, in one-letter code: Beta-toxin Am IT (65 aa).

The residue at position 1 (Glu-1) is a Pyrrolidone carboxylic acid (Glu); partial. In terms of domain architecture, LCN-type CS-alpha/beta spans 1 to 64; sequence EHGYLLDKYT…LWNYKTNKCK (64 aa). 4 disulfides stabilise this stretch: Cys-12–Cys-63, Cys-16–Cys-38, Cys-23–Cys-45, and Cys-27–Cys-47. Ser-65 carries the post-translational modification Serine amide.

The protein belongs to the long (4 C-C) scorpion toxin superfamily. Sodium channel inhibitor family. In terms of tissue distribution, expressed by the venom gland.

It is found in the secreted. Has a toxic effect on insects and mammals. On German cockroach larvae, it provokes contraction, paralysis and lethality. Intracerebroventricular injection into mice causes severe neurotoxic symptoms. It fully competes with the binding of the iodinated Css4 (AC P60266) on rat brain synaptosomes, with moderate affinity and in a concentration-dependent manner (EC(50)=25 nM). It may act on both site 3 and site 4 of voltage-gated sodium channels. The protein is Beta-toxin Am IT of Androctonus mauritanicus mauritanicus (Scorpion).